Reading from the N-terminus, the 439-residue chain is MQQFYCVKEVLNERLKRGYEFAVKNEYIEEKVTEKLQGIAATARMDGFRKGKVSPEFVRRMYGESIAGEVVAQVIDDISSKFLKEGDFGGIVTSGVEIKAYPKVCSNSEGDGGLVYELKFEVMPEVPVVDIDGITLKEIEVNISQEDVDEFLEDLKANYPSFVDVDDESRGVSDGDRVTISYRSAFKGKALRGGSAQGFTFVLGKGQLLEQFERQIVGMKKGESKEFKLEFPLDYMAKHFAGKEVDMHVTVERLSVKDEINDRETLASKCGFGSVEDMVKFATDGLNRRFADMGSVVAQRELLEHLDASYSVDVPEYIVAQELGRMRRELEEGDLNDAEALTKEAEQRVKLGMLLMKVATDAGVAVEVNDILSFIRVNYSAYGRSMEDVLKLFKNREDFREHVKGKVLEDKVVRYIISRAKKDRQSMSAGELKSLFESV.

The PPIase FKBP-type domain occupies Gly175–Ile260.

It belongs to the FKBP-type PPIase family. Tig subfamily.

It localises to the cytoplasm. It catalyses the reaction [protein]-peptidylproline (omega=180) = [protein]-peptidylproline (omega=0). In terms of biological role, involved in protein export. Acts as a chaperone by maintaining the newly synthesized protein in an open conformation. Functions as a peptidyl-prolyl cis-trans isomerase. This chain is Trigger factor, found in Anaplasma phagocytophilum (strain HZ).